A 352-amino-acid polypeptide reads, in one-letter code: Photosystem II protein D1 (352 aa).

T2 bears the N-acetylthreonine mark. The residue at position 2 (T2) is a Phosphothreonine. A run of 3 helical transmembrane segments spans residues 29–46 (YIGWFGVIMIPTLLTATS), 118–133 (HFLLGVCCYMGREWEL), and 142–156 (WIAVAYSAPVAAATA). H118 serves as a coordination point for chlorophyll a. Y126 is a pheophytin a binding site. D170 and E189 together coordinate [CaMn4O5] cluster. The chain crosses the membrane as a helical span at residues 197-218 (FHMLGVAGVFGGSLFSAMHGSL). Residue H198 participates in chlorophyll a binding. Residues H215 and 264-265 (SF) each bind a quinone. A Fe cation-binding site is contributed by H215. Residue H272 coordinates Fe cation. The helical transmembrane segment at 274–288 (FLAAWPVVGIWFTAL) threads the bilayer. Positions 332, 333, 342, and 344 each coordinate [CaMn4O5] cluster. Residues 345-352 (SVEAPVVG) constitute a propeptide that is removed on maturation.

This sequence belongs to the reaction center PufL/M/PsbA/D family. PSII is composed of 1 copy each of membrane proteins PsbA, PsbB, PsbC, PsbD, PsbE, PsbF, PsbH, PsbI, PsbJ, PsbK, PsbL, PsbM, PsbT, PsbX, PsbY, PsbZ, Psb30/Ycf12, at least 3 peripheral proteins of the oxygen-evolving complex and a large number of cofactors. It forms dimeric complexes. The cofactor is The D1/D2 heterodimer binds P680, chlorophylls that are the primary electron donor of PSII, and subsequent electron acceptors. It shares a non-heme iron and each subunit binds pheophytin, quinone, additional chlorophylls, carotenoids and lipids. D1 provides most of the ligands for the Mn4-Ca-O5 cluster of the oxygen-evolving complex (OEC). There is also a Cl(-1) ion associated with D1 and D2, which is required for oxygen evolution. The PSII complex binds additional chlorophylls, carotenoids and specific lipids.. Tyr-161 forms a radical intermediate that is referred to as redox-active TyrZ, YZ or Y-Z. Post-translationally, C-terminally processed by CTPA; processing is essential to allow assembly of the oxygen-evolving complex and thus photosynthetic growth.

It localises to the plastid. The protein localises to the chloroplast thylakoid membrane. It carries out the reaction 2 a plastoquinone + 4 hnu + 2 H2O = 2 a plastoquinol + O2. Functionally, photosystem II (PSII) is a light-driven water:plastoquinone oxidoreductase that uses light energy to abstract electrons from H(2)O, generating O(2) and a proton gradient subsequently used for ATP formation. It consists of a core antenna complex that captures photons, and an electron transfer chain that converts photonic excitation into a charge separation. The D1/D2 (PsbA/PsbD) reaction center heterodimer binds P680, the primary electron donor of PSII as well as several subsequent electron acceptors. The sequence is that of Photosystem II protein D1 from Zygnema circumcarinatum (Green alga).